Consider the following 760-residue polypeptide: Anti-sigma-I factor RsgI6 (760 aa).

At 1–55 (MIVGKVLDMDEKTAIIMTDDFAFLNVVRTSEMAVGKKVKVLDSDIIKPKNSLRRY) the chain is on the cytoplasmic side. A RsgI N-terminal anti-sigma domain is found at 2–49 (IVGKVLDMDEKTAIIMTDDFAFLNVVRTSEMAVGKKVKVLDSDIIKPK). The helical transmembrane segment at 56 to 76 (LPVAAVAACFVIVLSFVLMFI) threads the bilayer. The Extracellular segment spans residues 77 to 760 (NGNTARKNIY…GTLQTTYRIP (684 aa)). The interval 274 to 352 (AINTGPAESA…STPKPVSPVQ (79 aa)) is disordered. The segment covering 291–352 (LPATSTPGRT…STPKPVSPVQ (62 aa)) has biased composition (polar residues). The GH10 domain occupies 402 to 701 (DSSNKPIENA…NEAGRRFESL (300 aa)). Glu538 (proton donor) is an active-site residue. Glu635 functions as the Nucleophile in the catalytic mechanism.

It in the C-terminal section; belongs to the glycosyl hydrolase 10 (cellulase F) family. Interacts (via RsgI N-terminal anti-sigma domain) with SigI6.

It localises to the cell membrane. The catalysed reaction is Endohydrolysis of (1-&gt;4)-beta-D-xylosidic linkages in xylans.. The protein operates within glycan degradation; xylan degradation. Functionally, anti-sigma factor for SigI6. Negatively regulates SigI6 activity through direct interaction. Binding of the polysaccharide substrate to the extracellular C-terminal sensing domain of RsgI6 may induce a conformational change in its N-terminal cytoplasmic region, leading to the release and activation of SigI6. Binds to and hydrolyzes insoluble and soluble xylan substrates. Has low enzymatic activity. The chain is Anti-sigma-I factor RsgI6 from Acetivibrio thermocellus (strain ATCC 27405 / DSM 1237 / JCM 9322 / NBRC 103400 / NCIMB 10682 / NRRL B-4536 / VPI 7372) (Clostridium thermocellum).